A 336-amino-acid polypeptide reads, in one-letter code: Probable G-protein coupled receptor 82 (336 aa).

Over 1–11 (MNNNTTCIQPS) the chain is Extracellular. 2 N-linked (GlcNAc...) asparagine glycosylation sites follow: N3 and N4. The helical transmembrane segment at 12–32 (MISSMALPIIYILLCIVGVFG) threads the bilayer. Residues 33-55 (NTLSQWIFLTKIGKKTSTHIYLS) lie on the Cytoplasmic side of the membrane. A helical transmembrane segment spans residues 56 to 76 (HLVTANLLVCSAMPFMSIYFL). Residues 77 to 92 (KGFQWEYQSAQCRVVN) are Extracellular-facing. The chain crosses the membrane as a helical span at residues 93 to 115 (FLGTLSMHASMFVSLLILSWIAI). Topologically, residues 116-156 (SRYATLMQKDSSQETTSCYEKIFYGHLLKKFRQPNFARKLC) are cytoplasmic. A helical membrane pass occupies residues 157–177 (IYIWGVVLGIIIPVTVYYSVI). Residues 178–197 (EATEGEESLCYNRQMELGAM) lie on the Extracellular side of the membrane. The helical transmembrane segment at 198 to 218 (ISQIAGLIGTTFIGFSFLVVL) threads the bilayer. At 219–251 (TSYYSFVSHLRKIRTCTSIMEKDLTYSSVKRHL) the chain is on the cytoplasmic side. The chain crosses the membrane as a helical span at residues 252 to 272 (LVIQILLIVCFLPYSIFKPIF). Over 273-336 (YVLHQRDNCQ…SNSAHMQSYG (64 aa)) the chain is Extracellular.

Belongs to the G-protein coupled receptor 1 family.

It localises to the cell membrane. In terms of biological role, orphan receptor. In Homo sapiens (Human), this protein is Probable G-protein coupled receptor 82 (GPR82).